The chain runs to 130 residues: uncharacterized protein (130 aa).

Composition is skewed to polar residues over residues 1–27 and 36–46; these read MEIL…QPSQ and QAENQETAKNG. Disordered stretches follow at residues 1-46 and 103-130; these read MEIL…AKNG and VSAQ…ELDL. Positions 27-51 form a coiled coil; the sequence is QDAHEKARQQAENQETAKNGMISQI.

Belongs to the PDCD5 family.

This is an uncharacterized protein from Caenorhabditis elegans.